The sequence spans 431 residues: Adenylosuccinate lyase (431 aa).

Residues 4–5, 67–69, and 93–94 each bind N(6)-(1,2-dicarboxyethyl)-AMP; these read RY, NHD, and TS. Histidine 141 serves as the catalytic Proton donor/acceptor. Residue glutamine 212 participates in N(6)-(1,2-dicarboxyethyl)-AMP binding. Serine 262 serves as the catalytic Proton donor/acceptor. Residues serine 263, 268-270, and 307-311 contribute to the N(6)-(1,2-dicarboxyethyl)-AMP site; these read KKN and SVERY.

Belongs to the lyase 1 family. Adenylosuccinate lyase subfamily. In terms of assembly, homotetramer. Residues from neighboring subunits contribute catalytic and substrate-binding residues to each active site.

It carries out the reaction N(6)-(1,2-dicarboxyethyl)-AMP = fumarate + AMP. The catalysed reaction is (2S)-2-[5-amino-1-(5-phospho-beta-D-ribosyl)imidazole-4-carboxamido]succinate = 5-amino-1-(5-phospho-beta-D-ribosyl)imidazole-4-carboxamide + fumarate. It functions in the pathway purine metabolism; AMP biosynthesis via de novo pathway; AMP from IMP: step 2/2. It participates in purine metabolism; IMP biosynthesis via de novo pathway; 5-amino-1-(5-phospho-D-ribosyl)imidazole-4-carboxamide from 5-amino-1-(5-phospho-D-ribosyl)imidazole-4-carboxylate: step 2/2. Functionally, catalyzes two reactions in de novo purine nucleotide biosynthesis. Catalyzes the breakdown of 5-aminoimidazole- (N-succinylocarboxamide) ribotide (SAICAR or 2-[5-amino-1-(5-phospho-beta-D-ribosyl)imidazole-4-carboxamido]succinate) to 5-aminoimidazole-4-carboxamide ribotide (AICAR or 5-amino-1-(5-phospho-beta-D-ribosyl)imidazole-4-carboxamide) and fumarate, and of adenylosuccinate (ADS or N(6)-(1,2-dicarboxyethyl)-AMP) to adenosine monophosphate (AMP) and fumarate. This Thermotoga maritima (strain ATCC 43589 / DSM 3109 / JCM 10099 / NBRC 100826 / MSB8) protein is Adenylosuccinate lyase (purB).